Here is a 382-residue protein sequence, read N- to C-terminus: MNPSESNVKPPLWLLAELTYRCPLQCPYCSNPLDFAQQEKELSTAQWIEVFKQARAMGAVQIGFSGGEPLVRKDLPELIRSARELGFYTNLITSGIGLTQKKIDAFAEAGLDHIQISFQASDETLNAALAGSQKAFQQKLEMARAVKAHGYPMVLNFVLHRHNIDQLDRIIELCIELEADDVELATCQFYGWAQLNREGLLPTRDQLVRAEAVVHRYREKMAASGNLANLLFVTPDYYEERPKGCMGGWGAIFLSVTPEGMALPCHSARQLPIRFPSVLEHSLQDIWFNSFGFNRYRGFDWMPEPCRSCDEKEKDFGGCRCQAFMLTGNADNADPVCSKSEHHGTILAAREQANCTNIQVNQLRFRNRANSERVNSQLIFKG.

The Radical SAM core domain occupies 8–223 (VKPPLWLLAE…VHRYREKMAA (216 aa)). Cysteine 22, cysteine 26, and cysteine 29 together coordinate [4Fe-4S] cluster.

It belongs to the radical SAM superfamily. PqqE family. In terms of assembly, interacts with PqqD. The interaction is necessary for activity of PqqE. The cofactor is [4Fe-4S] cluster.

The enzyme catalyses [PQQ precursor protein] + S-adenosyl-L-methionine = E-Y cross-linked-[PQQ precursor protein] + 5'-deoxyadenosine + L-methionine + H(+). The protein operates within cofactor biosynthesis; pyrroloquinoline quinone biosynthesis. In terms of biological role, catalyzes the cross-linking of a glutamate residue and a tyrosine residue in the PqqA protein as part of the biosynthesis of pyrroloquinoline quinone (PQQ). In Erwinia tasmaniensis (strain DSM 17950 / CFBP 7177 / CIP 109463 / NCPPB 4357 / Et1/99), this protein is PqqA peptide cyclase.